Reading from the N-terminus, the 556-residue chain is Bifunctional methyltransferase (556 aa).

The segment at 1–310 (MQYSIQKFLN…NRVIEISLIQ (310 aa)) is RF MTase. Residues 148–152 (GTGSG), Asp171, Trp200, and Asn215 each bind S-adenosyl-L-methionine. 215–218 (NPPY) provides a ligand contact to substrate. The interval 313 to 556 (RSYARRIGKS…IITKIPPKSY (244 aa)) is tRNA MTase. The segment at 348-399 (KNYNSCKIKSNYTKFNLEKSKESVSRGAERIKIREHLRTYKEDVANFSSSTS) is insert. Glu403, Glu428, Asn455, and Asp477 together coordinate S-adenosyl-L-methionine. The active site involves Asp477. Substrate is bound by residues Lys481 and Asp513.

It in the C-terminal section; belongs to the class I-like SAM-binding methyltransferase superfamily. TrmB family. In the N-terminal section; belongs to the protein N5-glutamine methyltransferase family. PrmC subfamily.

The catalysed reaction is L-glutaminyl-[peptide chain release factor] + S-adenosyl-L-methionine = N(5)-methyl-L-glutaminyl-[peptide chain release factor] + S-adenosyl-L-homocysteine + H(+). It carries out the reaction guanosine(46) in tRNA + S-adenosyl-L-methionine = N(7)-methylguanosine(46) in tRNA + S-adenosyl-L-homocysteine. Functionally, methylates the class 1 translation termination release factors RF1/PrfA and RF2/PrfB on the glutamine residue of the universally conserved GGQ motif. In terms of biological role, catalyzes the formation of N(7)-methylguanine at position 46 (m7G46) in tRNA. The polypeptide is Bifunctional methyltransferase (prmC/trmB) (Rickettsia bellii (strain RML369-C)).